Here is a 276-residue protein sequence, read N- to C-terminus: Large ribosomal subunit protein uL2 (276 aa).

Residues 219–276 are disordered; sequence TVRGSVMNPNDHPHGGGEGRSPIGRPSPVTPWGKPALGYKTRKKNKASNKLIVSRRTK. The segment covering 258–276 has biased composition (basic residues); sequence KTRKKNKASNKLIVSRRTK.

It belongs to the universal ribosomal protein uL2 family. In terms of assembly, part of the 50S ribosomal subunit. Forms a bridge to the 30S subunit in the 70S ribosome.

Functionally, one of the primary rRNA binding proteins. Required for association of the 30S and 50S subunits to form the 70S ribosome, for tRNA binding and peptide bond formation. It has been suggested to have peptidyltransferase activity; this is somewhat controversial. Makes several contacts with the 16S rRNA in the 70S ribosome. The sequence is that of Large ribosomal subunit protein uL2 from Clostridioides difficile (strain 630) (Peptoclostridium difficile).